The primary structure comprises 832 residues: MPLSYQHFRRLLLLDDEAGPLEEELPRLADEGLNRRVAEDLNLGNLNVSIPWTHKVGNFTGLYSSSVPVFNPHWKTPTFPNIHLHQDIINKCEQFVGPLTVNEKRRLQLIMPARFYPNFTKYLPLDKGIKPYYPEHLVNHYFQTRHYLHTLWKAGILYKRETTHSASFCGSPYSWEQKLQHGAESFHQQSPGILSRPPVGSSLQSKHQKSRLGLQSQQGHLARRQQGRSWSIRARVHPTARRPFGVEPAGSGHTTNFASKSASCSYQSPVRKAAYPTVSTSKRRSSSGHAVDFHNLPPSSARSQSERPVFPCWWLQFRNSKPCSDYCLSHIVNLLEDWGPCTEHGEHHIRIPRTPARVTGGVFLVDKNPHNTAESRLVVDFSQFSRGNYRVSWPKFAVPNLQSLTNLLSSNLSWLSLDVSAAFYHLPLHPAAMPHLLVGSSGLSRYVARLSSNSRIFDHQHGTMQNLHDYCSRNLYVSLLLLYQTFGRKLHLYSHPIILGFRKIPMGVGLSPFLLAQFTSAICSVVRRAFPHCLAFSYMDDVVLGAKSVQHLESLFTAVTNFLLSLGIHLNPNKTKRWGYSLHFMGYVIGSWGSLPQDHIVHKLKECFRKLPVNRPIDWKVCQRIVGLLGFAAPFTQCGYPALMPLYACIQSKQAFTFSPTYKAFLYKQYMNLYPVARQRSGLCQVFADATPTGWGLAMGHQRMRGTFQAPLPIHTAELLAACFARSRSGANILGTDNSVVLSRKYTSFPWLLGCAANWILRGTSFVYVPSALNPADDPSRGRLGLCRPLLRLPFRPTTGRTSLYAVSPSVPSHLPDHVHFASPLHVAWRPP.

A terminal protein domain (TP) region spans residues M1 to Q177. Positions K178–L335 are spacer. Disordered stretches follow at residues F186–S229 and Y275–S305. Residues E336–Q679 form a polymerase/reverse transcriptase domain (RT) region. A Reverse transcriptase domain is found at E346–I589. Mg(2+) contacts are provided by D418, D540, and D541.

The protein belongs to the hepadnaviridae P protein family.

The enzyme catalyses DNA(n) + a 2'-deoxyribonucleoside 5'-triphosphate = DNA(n+1) + diphosphate. The catalysed reaction is Endonucleolytic cleavage to 5'-phosphomonoester.. Activated by host HSP70 and HSP40 in vitro to be able to bind the epsilon loop of the pgRNA. Because deletion of the RNase H region renders the protein partly chaperone-independent, the chaperones may be needed indirectly to relieve occlusion of the RNA-binding site by this domain. Inhibited by several reverse-transcriptase inhibitors: Lamivudine, Adefovir and Entecavir. Multifunctional enzyme that converts the viral RNA genome into dsDNA in viral cytoplasmic capsids. This enzyme displays a DNA polymerase activity that can copy either DNA or RNA templates, and a ribonuclease H (RNase H) activity that cleaves the RNA strand of RNA-DNA heteroduplexes in a partially processive 3'- to 5'-endonucleasic mode. Neo-synthesized pregenomic RNA (pgRNA) are encapsidated together with the P protein, and reverse-transcribed inside the nucleocapsid. Initiation of reverse-transcription occurs first by binding the epsilon loop on the pgRNA genome, and is initiated by protein priming, thereby the 5'-end of (-)DNA is covalently linked to P protein. Partial (+)DNA is synthesized from the (-)DNA template and generates the relaxed circular DNA (RC-DNA) genome. After budding and infection, the RC-DNA migrates in the nucleus, and is converted into a plasmid-like covalently closed circular DNA (cccDNA). The activity of P protein does not seem to be necessary for cccDNA generation, and is presumably released from (+)DNA by host nuclear DNA repair machinery. In Homo sapiens (Human), this protein is Protein P.